The primary structure comprises 412 residues: Serine hydroxymethyltransferase (412 aa).

(6S)-5,6,7,8-tetrahydrofolate is bound by residues Leu117 and 121–123; that span reads GHL. At Lys226 the chain carries N6-(pyridoxal phosphate)lysine.

The protein belongs to the SHMT family. As to quaternary structure, homodimer. The cofactor is pyridoxal 5'-phosphate.

The protein resides in the cytoplasm. It catalyses the reaction (6R)-5,10-methylene-5,6,7,8-tetrahydrofolate + glycine + H2O = (6S)-5,6,7,8-tetrahydrofolate + L-serine. It participates in one-carbon metabolism; tetrahydrofolate interconversion. It functions in the pathway amino-acid biosynthesis; glycine biosynthesis; glycine from L-serine: step 1/1. Functionally, catalyzes the reversible interconversion of serine and glycine with tetrahydrofolate (THF) serving as the one-carbon carrier. This reaction serves as the major source of one-carbon groups required for the biosynthesis of purines, thymidylate, methionine, and other important biomolecules. Also exhibits THF-independent aldolase activity toward beta-hydroxyamino acids, producing glycine and aldehydes, via a retro-aldol mechanism. This chain is Serine hydroxymethyltransferase, found in Staphylococcus epidermidis (strain ATCC 35984 / DSM 28319 / BCRC 17069 / CCUG 31568 / BM 3577 / RP62A).